The primary structure comprises 217 residues: MSKLPFLSRAAFARITTPIARGLLRVGLTPDVVTILGTTASVAGALTLFPMGKLFAGACVVWFFVLFDMLDGAMARERGGGTRFGAVLDATCDRISDGAVFCGLLWWIAFHMRDRPLVIATLICLVTSQVISYIKARAEASGLRGDGGFIERPERLIIVLTGAGVSDFPFVPWPPALSVGMWLLAVASVITCVQRLHTVWTSPGAIDRMAIPGKGDR.

A run of 2 helical transmembrane segments spans residues 28 to 49 (LTPD…LTLF) and 55 to 74 (FAGA…DGAM). Residue 31–34 (DVVT) participates in a CDP-1,2-diacyl-sn-glycerol binding. Residues aspartate 68 and aspartate 71 each contribute to the Mg(2+) site. Residues glycine 72, arginine 76, and threonine 82 each coordinate a CDP-1,2-diacyl-sn-glycerol. Residues aspartate 89 and aspartate 93 each contribute to the Mg(2+) site. The Proton acceptor role is filled by aspartate 93. A run of 4 helical transmembrane segments spans residues 95–112 (ISDG…AFHM), 118–136 (VIAT…YIKA), 156–173 (LIIV…FVPW), and 179–200 (VGMW…HTVW).

It belongs to the CDP-alcohol phosphatidyltransferase class-I family. Homodimer. The cofactor is Mg(2+).

It localises to the cell membrane. The enzyme catalyses a CDP-1,2-diacyl-sn-glycerol + 1D-myo-inositol 3-phosphate = a 1,2-diacyl-sn-glycero-3-phospho-(1D-myo-inositol-3-phosphate) + CMP + H(+). The catalysed reaction is 1,2-di-(9Z-octadecenoyl)-sn-glycero-3-cytidine-5'-diphosphate + 1D-myo-inositol 3-phosphate = 1,2-di-(9Z-octadecenoyl)-sn-glycero-3-phospho-(1D-myo-inositol-3-phosphate) + CMP + H(+). The protein operates within phospholipid metabolism; phosphatidylinositol phosphate biosynthesis. Competitively inhibited by several inositol 1-phosphate analogs, including the phosphonate analog 1-deoxy-1-phosphonomethyl-myo-inositol (Ino-C-P). Its function is as follows. Catalyzes the conjugation of the 1'-hydroxyl group of D-myo-inositol-3-phosphate (also named L-myo-inositol-1-phosphate) with a lipid tail of cytidine diphosphate diacylglycerol (CDP-DAG), forming phosphatidylinositol phosphate (PIP) and CMP. PIP is a precursor of phosphatidylinositol (PI) which is an essential lipid for mycobacteria required for formation of their cell wall. The polypeptide is Phosphatidylinositol phosphate synthase (Mycobacterium bovis (strain BCG / Pasteur 1173P2)).